A 94-amino-acid chain; its full sequence is Phosphoribosyl-ATP pyrophosphatase (94 aa).

It belongs to the PRA-PH family.

The protein resides in the cytoplasm. The enzyme catalyses 1-(5-phospho-beta-D-ribosyl)-ATP + H2O = 1-(5-phospho-beta-D-ribosyl)-5'-AMP + diphosphate + H(+). The protein operates within amino-acid biosynthesis; L-histidine biosynthesis; L-histidine from 5-phospho-alpha-D-ribose 1-diphosphate: step 2/9. The chain is Phosphoribosyl-ATP pyrophosphatase (hisE) from Pyrobaculum aerophilum (strain ATCC 51768 / DSM 7523 / JCM 9630 / CIP 104966 / NBRC 100827 / IM2).